Reading from the N-terminus, the 140-residue chain is uncharacterized protein (140 aa).

This is an uncharacterized protein from Mycoplasma pneumoniae (strain ATCC 29342 / M129 / Subtype 1) (Mycoplasmoides pneumoniae).